Consider the following 335-residue polypeptide: Succinylglutamate desuccinylase (335 aa).

Zn(2+)-binding residues include His-59, Glu-62, and His-151. Residue Glu-215 is part of the active site.

This sequence belongs to the AspA/AstE family. Succinylglutamate desuccinylase subfamily. Zn(2+) is required as a cofactor.

It catalyses the reaction N-succinyl-L-glutamate + H2O = L-glutamate + succinate. It functions in the pathway amino-acid degradation; L-arginine degradation via AST pathway; L-glutamate and succinate from L-arginine: step 5/5. Transforms N(2)-succinylglutamate into succinate and glutamate. This Pseudomonas putida (strain GB-1) protein is Succinylglutamate desuccinylase.